Reading from the N-terminus, the 244-residue chain is 7-cyano-7-deazaguanine synthase (244 aa).

14-24 serves as a coordination point for ATP; that stretch reads FSGGQDSATCV. Zn(2+)-binding residues include cysteine 202, cysteine 217, cysteine 220, and cysteine 223.

This sequence belongs to the QueC family. Zn(2+) is required as a cofactor.

The catalysed reaction is 7-carboxy-7-deazaguanine + NH4(+) + ATP = 7-cyano-7-deazaguanine + ADP + phosphate + H2O + H(+). It participates in purine metabolism; 7-cyano-7-deazaguanine biosynthesis. Functionally, catalyzes the ATP-dependent conversion of 7-carboxy-7-deazaguanine (CDG) to 7-cyano-7-deazaguanine (preQ(0)). The protein is 7-cyano-7-deazaguanine synthase of Burkholderia multivorans (strain ATCC 17616 / 249).